A 343-amino-acid polypeptide reads, in one-letter code: Ricin B-like lectin R40G2 (343 aa).

Residues 194–340 enclose the Ricin B-type lectin domain; it reads TVRVFSAAGE…CEGDNQRWKI (147 aa).

Functionally, lectin which binds carbohydrates in vitro. Interacts through its lectin domain with glycan structures containing specific motifs. This chain is Ricin B-like lectin R40G2, found in Oryza sativa subsp. japonica (Rice).